A 233-amino-acid polypeptide reads, in one-letter code: DnaA regulatory inactivator Hda (233 aa).

Belongs to the DnaA family. HdA subfamily. As to quaternary structure, the active form seems to be an ADP-bound monomer. Forms the RIDA complex (regulatory inactivation of DnaA) of ATP-DnaA, ADP-Hda and the DNA-loaded beta sliding clamp (dnaN).

Functionally, mediates the interaction of DNA replication initiator protein DnaA with DNA polymerase subunit beta sliding clamp (dnaN). Stimulates hydrolysis of ATP-DnaA to ADP-DnaA, rendering DnaA inactive for reinitiation, a process called regulatory inhibition of DnaA or RIDA. In Shigella boydii serotype 4 (strain Sb227), this protein is DnaA regulatory inactivator Hda.